The sequence spans 601 residues: Elongation factor 4 (601 aa).

The tr-type G domain occupies 7–189; the sequence is RNIRNFSIIA…AIVHRIPPPA (183 aa). GTP contacts are provided by residues 19 to 24 and 136 to 139; these read DHGKST and NKID.

The protein belongs to the TRAFAC class translation factor GTPase superfamily. Classic translation factor GTPase family. LepA subfamily.

The protein resides in the cell inner membrane. It carries out the reaction GTP + H2O = GDP + phosphate + H(+). Functionally, required for accurate and efficient protein synthesis under certain stress conditions. May act as a fidelity factor of the translation reaction, by catalyzing a one-codon backward translocation of tRNAs on improperly translocated ribosomes. Back-translocation proceeds from a post-translocation (POST) complex to a pre-translocation (PRE) complex, thus giving elongation factor G a second chance to translocate the tRNAs correctly. Binds to ribosomes in a GTP-dependent manner. This Xanthomonas oryzae pv. oryzae (strain MAFF 311018) protein is Elongation factor 4.